We begin with the raw amino-acid sequence, 321 residues long: Malate dehydrogenase (321 aa).

NAD(+)-binding positions include 10 to 15 and aspartate 34; that span reads GSGMIG. Substrate-binding residues include arginine 83 and arginine 89. Residues asparagine 96 and 119 to 121 contribute to the NAD(+) site; that span reads ITN. Residues asparagine 121 and arginine 152 each coordinate substrate. Catalysis depends on histidine 176, which acts as the Proton acceptor.

It belongs to the LDH/MDH superfamily. MDH type 3 family.

The enzyme catalyses (S)-malate + NAD(+) = oxaloacetate + NADH + H(+). Catalyzes the reversible oxidation of malate to oxaloacetate. The sequence is that of Malate dehydrogenase from Sinorhizobium fredii (strain NBRC 101917 / NGR234).